Here is a 358-residue protein sequence, read N- to C-terminus: Chitin synthase export chaperone (358 aa).

7 helical membrane-spanning segments follow: residues 49–69, 88–108, 117–137, 159–179, 185–205, 220–240, and 250–270; these read IIFQ…TVVM, FFYL…GVIP, FVAV…INGF, FVAF…WAGL, VGIF…YVVM, LGDI…LYAF, and HYLD…MMVY. Residues 321–358 are disordered; that stretch reads ASGPGTGSGASASGYEGGHHRRESHGYTPSPNRQSLRY. Residues 347–358 are compositionally biased toward polar residues; the sequence is YTPSPNRQSLRY.

Belongs to the CHS7 family. In terms of assembly, interacts with chs-3.

The protein localises to the endoplasmic reticulum membrane. Its function is as follows. Chaperone required for the export of the chitin synthase chs-3 from the endoplasmic reticulum. The protein is Chitin synthase export chaperone (csc-1) of Neurospora crassa (strain ATCC 24698 / 74-OR23-1A / CBS 708.71 / DSM 1257 / FGSC 987).